The following is a 343-amino-acid chain: N-acetylornithine carbamoyltransferase (343 aa).

Carbamoyl phosphate is bound by residues 49–52 (SMRT), tryptophan 77, and arginine 112. Position 144 (glutamate 144) interacts with N(2)-acetyl-L-ornithine. 148–151 (HPCQ) is a binding site for carbamoyl phosphate. Lysine 252 and leucine 295 together coordinate N(2)-acetyl-L-ornithine. Position 294–295 (294–295 (CL)) interacts with carbamoyl phosphate. Lysine 302 bears the N6-carboxylysine mark. Arginine 322 lines the carbamoyl phosphate pocket.

The protein belongs to the aspartate/ornithine carbamoyltransferase superfamily. AOTCase family. In terms of assembly, homotrimer.

The protein localises to the cytoplasm. It carries out the reaction N(2)-acetyl-L-ornithine + carbamoyl phosphate = N(2)-acetyl-L-citrulline + phosphate + H(+). The protein operates within amino-acid biosynthesis; L-arginine biosynthesis. Carboxylation at Lys-302 increases the catalytic activity of the enzyme. Catalyzes the transfer of the carbamoyl group from carbamoyl phosphate to the delta-amino group of N(2)-acetyl-L-ornithine to produce N(2)-acetyl-L-citrulline. This is a step in an alternative arginine biosynthesis pathway. The enzyme has no activity with ornithine. This Xanthomonas axonopodis pv. citri (strain 306) protein is N-acetylornithine carbamoyltransferase.